A 147-amino-acid chain; its full sequence is uncharacterized protein (147 aa).

Over residues 72 to 81 (ARAKPASRAP) the composition is skewed to low complexity. Residues 72-147 (ARAKPASRAP…QGAAGRRLSP (76 aa)) are disordered.

This is an uncharacterized protein from Homo sapiens (Human).